We begin with the raw amino-acid sequence, 578 residues long: Probable arginine--tRNA ligase, mitochondrial (578 aa).

Residues 1-16 (MACGFRRSIACQLSRV) constitute a mitochondrion transit peptide. L-arginine contacts are provided by residues 133 to 135 (SPN), H144, Y322, D326, and Q350. A 'HIGH' region motif is present at residues 133–144 (SPNIAKKFHVGH). Residue K568 is modified to N6-acetyllysine.

This sequence belongs to the class-I aminoacyl-tRNA synthetase family.

The protein resides in the mitochondrion membrane. It carries out the reaction tRNA(Arg) + L-arginine + ATP = L-arginyl-tRNA(Arg) + AMP + diphosphate. In terms of biological role, catalyzes the attachment of arginine to tRNA(Arg) in a two-step reaction: arginine is first activated by ATP to form Arg-AMP and then transferred to the acceptor end of tRNA(Arg). This chain is Probable arginine--tRNA ligase, mitochondrial (Rars2), found in Mus musculus (Mouse).